Consider the following 487-residue polypeptide: Probable Xaa-Pro aminopeptidase MGYG_06974 (487 aa).

4 residues coordinate Mn(2+): aspartate 255, aspartate 266, glutamate 414, and glutamate 458.

It belongs to the peptidase M24B family. Mn(2+) is required as a cofactor.

It carries out the reaction Release of any N-terminal amino acid, including proline, that is linked to proline, even from a dipeptide or tripeptide.. Catalyzes the removal of a penultimate prolyl residue from the N-termini of peptides. This Arthroderma gypseum (strain ATCC MYA-4604 / CBS 118893) (Microsporum gypseum) protein is Probable Xaa-Pro aminopeptidase MGYG_06974.